A 244-amino-acid chain; its full sequence is Probable transcriptional regulatory protein BT0025 (244 aa).

Belongs to the TACO1 family.

It is found in the cytoplasm. The sequence is that of Probable transcriptional regulatory protein BT0025 from Borrelia turicatae (strain 91E135).